The chain runs to 359 residues: MRSIRKRWTICTISLLLIFYKTKEMARTEEHQETQLIGDGELSLSRSLVNSSDKIIRKAGSSIFQHSVEGGKINSSLVLEIRKNILRFLDAERDVSVVKSSFKPGDVIHYVLDRRRTLNISQDLHSLLPEVSPMKNRRFKTCAVVGNSGILLDSECGKEIDSHNFVIRCNLAPVVEFAADVGTKSDFITMNPSVVQRAFGGFRNESDREKFVHRLSMLNDSVLWIPAFMVKGGEKHVEWVNALILKNKLKVRTAYPSLRLIHAVRGYWLTNKVPIKRPSTGLLMYTLATRFCDEIHLYGFWPFPKDLNGKAVKYHYYDDLKYRYFSNASPHRMPLEFKTLNVLHNRGALKLTTGKCIKQ.

At 1–7 (MRSIRKR) the chain is on the cytoplasmic side. Residues 8–20 (WTICTISLLLIFY) traverse the membrane as a helical; Signal-anchor for type II membrane protein segment. Topologically, residues 21–359 (KTKEMARTEE…KLTTGKCIKQ (339 aa)) are lumenal. N-linked (GlcNAc...) asparagine glycans are attached at residues Asn-50, Asn-74, and Asn-119. Cystine bridges form between Cys-142–Cys-292 and Cys-156–Cys-356. Asn-147 and Asn-170 together coordinate CMP-N-acetyl-beta-neuraminate. N-linked (GlcNAc...) asparagine glycans are attached at residues Asn-204 and Asn-219. Residues Ser-279, Thr-280, Gly-281, and Trp-301 each contribute to the CMP-N-acetyl-beta-neuraminate site. His-331 serves as the catalytic Proton donor/acceptor.

The protein belongs to the glycosyltransferase 29 family. Post-translationally, autopolysialylated.

The protein resides in the golgi apparatus membrane. It is found in the secreted. It carries out the reaction [N-acetyl-alpha-D-neuraminosyl-(2-&gt;8)](n) + CMP-N-acetyl-beta-neuraminate = [N-acetyl-alpha-D-neuraminosyl-(2-&gt;8)](n+1) + CMP + H(+). Catalyzes the transfer of a sialic acid from a CMP-linked sialic acid donor onto a terminal alpha-2,3-, alpha-2,6-, or alpha-2,8-linked sialic acid of an N-linked glycan protein acceptor through alpha-2,8-linkages. Therefore, participates in polysialic acid synthesis on various sialylated N-acetyllactosaminyl oligosaccharides, including NCAM1 N-glycans, FETUB N-glycans and AHSG. It is noteworthy that alpha-2,3-linked sialic acid is apparently a better acceptor than alpha-2,6-linked sialic acid. The chain is CMP-N-acetylneuraminate-poly-alpha-2,8-sialyltransferase (ST8SIA4) from Bos taurus (Bovine).